The primary structure comprises 815 residues: (E)-gamma-bisabolene synthase (815 aa).

Residues Asp-561, Asp-565, Asp-709, and Glu-717 each coordinate Mg(2+). The short motif at 561 to 565 (DDMYD) is the DDXXD motif element.

This sequence belongs to the terpene synthase family. Tpsd subfamily. It depends on Mg(2+) as a cofactor. Mn(2+) is required as a cofactor.

The protein localises to the cytoplasm. It catalyses the reaction (2E,6E)-farnesyl diphosphate = (E)-gamma-bisabolene + diphosphate. It functions in the pathway terpene metabolism; oleoresin biosynthesis. Involved in defensive oleoresin formation in conifers in response to insect attack or other injury. Involved in sesquiterpene (C15) olefins biosynthesis. Produces mainly (E)-gamma-bisabolene when used with farnesyl diphosphate as substrate. No activity with geranyl diphosphate or geranylgeranyl diphosphate. This Pseudotsuga menziesii (Douglas-fir) protein is (E)-gamma-bisabolene synthase (TPS3).